The chain runs to 314 residues: Ribosomal RNA small subunit methyltransferase H (314 aa).

S-adenosyl-L-methionine is bound by residues 36–38 (GGH), Asp56, Phe83, Asp104, and Gln111.

Belongs to the methyltransferase superfamily. RsmH family.

It localises to the cytoplasm. It carries out the reaction cytidine(1402) in 16S rRNA + S-adenosyl-L-methionine = N(4)-methylcytidine(1402) in 16S rRNA + S-adenosyl-L-homocysteine + H(+). In terms of biological role, specifically methylates the N4 position of cytidine in position 1402 (C1402) of 16S rRNA. In Syntrophotalea carbinolica (strain DSM 2380 / NBRC 103641 / GraBd1) (Pelobacter carbinolicus), this protein is Ribosomal RNA small subunit methyltransferase H.